The primary structure comprises 172 residues: MPGNSGNDRSVVVGRVSGAFGVRGWVKAVSFTDPPVNLVGYRPWTLRRGDAERRADVLEGREHGNAVIVRLQGVDTREQAEALKGFEVTVRRSQLPPPAPGEYYRVDLVGLKVVNLGETVLGEVVDVMETGANDVLVVQGDRERLLPFVQGVFVKSVNLEESRIVVDWDPGF.

The PRC barrel domain occupies 100–172 (PGEYYRVDLV…RIVVDWDPGF (73 aa)).

It belongs to the RimM family. In terms of assembly, binds ribosomal protein uS19.

The protein localises to the cytoplasm. In terms of biological role, an accessory protein needed during the final step in the assembly of 30S ribosomal subunit, possibly for assembly of the head region. Essential for efficient processing of 16S rRNA. May be needed both before and after RbfA during the maturation of 16S rRNA. It has affinity for free ribosomal 30S subunits but not for 70S ribosomes. This chain is Ribosome maturation factor RimM, found in Methylococcus capsulatus (strain ATCC 33009 / NCIMB 11132 / Bath).